Consider the following 55-residue polypeptide: UPF0434 protein Erum1340/ERWE_CDS_01300 (55 aa).

It belongs to the UPF0434 family.

This is UPF0434 protein Erum1340/ERWE_CDS_01300 from Ehrlichia ruminantium (strain Welgevonden).